The following is a 220-amino-acid chain: Thioredoxin domain-containing protein (220 aa).

An N-terminal signal peptide occupies residues 1–19 (MKFLILNCLILFSLISSEA). Positions 20 to 141 (TNVKLDREDQ…SEFALGDFKN (122 aa)) constitute a Thioredoxin domain. Residues 20-181 (TNVKLDREDQ…YDAALAGFVT (162 aa)) are Lumenal-facing. Cysteines 64 and 67 form a disulfide. Residues 182 to 202 (ISSFSFLFGLLVGLMLSLFLF) traverse the membrane as a helical segment. Residues 203-220 (TRRATRKPKVLTERKKDK) are Cytoplasmic-facing. Positions 217 to 220 (KKDK) match the Di-lysine motif motif.

The protein belongs to the protein disulfide isomerase family.

The protein localises to the endoplasmic reticulum membrane. The polypeptide is Thioredoxin domain-containing protein (Theileria parva (East coast fever infection agent)).